A 402-amino-acid chain; its full sequence is Enoyl-[acyl-carrier-protein] reductase [NADH] (402 aa).

NAD(+)-binding positions include 48 to 53, 74 to 75, 111 to 112, and 140 to 141; these read GASSGY, FE, DA, and LA. Tyr-226 contacts substrate. The active-site Proton donor is the Tyr-236. NAD(+)-binding positions include Lys-245 and 274-276; that span reads VVT.

The protein belongs to the TER reductase family. Monomer.

It catalyses the reaction a 2,3-saturated acyl-[ACP] + NAD(+) = a (2E)-enoyl-[ACP] + NADH + H(+). The catalysed reaction is a 2,3-saturated acyl-CoA + NAD(+) = a (2E)-enoyl-CoA + NADH + H(+). Its pathway is lipid metabolism; fatty acid biosynthesis. Functionally, involved in the final reduction of the elongation cycle of fatty acid synthesis (FAS II). Catalyzes the reduction of a carbon-carbon double bond in an enoyl moiety that is covalently linked to an acyl carrier protein (ACP). It can also use crotonyl-CoA. This chain is Enoyl-[acyl-carrier-protein] reductase [NADH], found in Xanthomonas oryzae pv. oryzae (strain MAFF 311018).